A 487-amino-acid polypeptide reads, in one-letter code: Probable aspartic-type endopeptidase opsB (487 aa).

Residues 1-20 form the signal peptide; that stretch reads MQKSWLVLLVACLGLQGTTA. Residues 69 to 398 form the Peptidase A1 domain; sequence YFCNITLGTP…DLSNNEISLA (330 aa). N72 is a glycosylation site (N-linked (GlcNAc...) asparagine). D87 is an active-site residue. N99, N111, N132, and N272 each carry an N-linked (GlcNAc...) asparagine glycan. D286 is an active-site residue. Residues N329 and N403 are each glycosylated (N-linked (GlcNAc...) asparagine). A463 carries GPI-anchor amidated alanine lipidation. Residues 464-487 constitute a propeptide, removed in mature form; that stretch reads PAGPTDVPKHLVLGAAAIGYVLAF.

This sequence belongs to the peptidase A1 family.

The protein resides in the cell membrane. In terms of biological role, probable GPI-anchored aspartic-type endopeptidase. The protein is Probable aspartic-type endopeptidase opsB (opsB) of Aspergillus oryzae (strain ATCC 42149 / RIB 40) (Yellow koji mold).